The primary structure comprises 591 residues: Oxaloacetate decarboxylase alpha chain (591 aa).

A Pyruvate carboxyltransferase domain is found at 3–263 (IAITDVVLRD…DTGLDILKLE (261 aa)). A Biotinyl-binding domain is found at 518–591 (PAGAGTPVTA…SVGDTLMTLA (74 aa)). Lysine 557 carries the post-translational modification N6-biotinyllysine.

In terms of assembly, composed of three chains (alpha, beta, and gamma). Biotin is required as a cofactor.

The enzyme catalyses oxaloacetate + 2 Na(+)(in) + H(+) = pyruvate + 2 Na(+)(out) + CO2. Its function is as follows. Catalyzes the decarboxylation of oxaloacetate coupled to Na(+) translocation. This chain is Oxaloacetate decarboxylase alpha chain (oadA1), found in Salmonella typhimurium (strain LT2 / SGSC1412 / ATCC 700720).